The primary structure comprises 218 residues: Thiopurine S-methyltransferase (218 aa).

Residues W10, L45, E66, and R123 each coordinate S-adenosyl-L-methionine.

The protein belongs to the class I-like SAM-binding methyltransferase superfamily. TPMT family.

The protein localises to the cytoplasm. It catalyses the reaction S-adenosyl-L-methionine + a thiopurine = S-adenosyl-L-homocysteine + a thiopurine S-methylether.. This is Thiopurine S-methyltransferase from Shewanella baltica (strain OS155 / ATCC BAA-1091).